Consider the following 112-residue polypeptide: Putative pterin-4-alpha-carbinolamine dehydratase (112 aa).

The protein belongs to the pterin-4-alpha-carbinolamine dehydratase family.

The catalysed reaction is (4aS,6R)-4a-hydroxy-L-erythro-5,6,7,8-tetrahydrobiopterin = (6R)-L-erythro-6,7-dihydrobiopterin + H2O. The protein is Putative pterin-4-alpha-carbinolamine dehydratase of Shewanella sp. (strain MR-7).